We begin with the raw amino-acid sequence, 281 residues long: Phosphatidylglycerol--prolipoprotein diacylglyceryl transferase (281 aa).

Transmembrane regions (helical) follow at residues 29–49 (FYSL…GKMI), 64–84 (LFFY…VLFY), 100–120 (GGMS…FVSW), and 124–144 (LNWL…MFLG). R145 contributes to the a 1,2-diacyl-sn-glycero-3-phospho-(1'-sn-glycerol) binding site. Helical transmembrane passes span 180–200 (QLYQ…LLFW), 209–229 (GVLV…NEFF), and 248–268 (GQWL…YALT).

Belongs to the Lgt family.

Its subcellular location is the cell inner membrane. It catalyses the reaction L-cysteinyl-[prolipoprotein] + a 1,2-diacyl-sn-glycero-3-phospho-(1'-sn-glycerol) = an S-1,2-diacyl-sn-glyceryl-L-cysteinyl-[prolipoprotein] + sn-glycerol 1-phosphate + H(+). It participates in protein modification; lipoprotein biosynthesis (diacylglyceryl transfer). Its function is as follows. Catalyzes the transfer of the diacylglyceryl group from phosphatidylglycerol to the sulfhydryl group of the N-terminal cysteine of a prolipoprotein, the first step in the formation of mature lipoproteins. The polypeptide is Phosphatidylglycerol--prolipoprotein diacylglyceryl transferase (Erythrobacter litoralis (strain HTCC2594)).